Reading from the N-terminus, the 212-residue chain is Protein Nef (212 aa).

The N-myristoyl glycine; by host moiety is linked to residue Gly-2. Ser-6 carries the post-translational modification Phosphoserine; by host. An acidic; interacts with host PACS1 and PACS2; stabilizes the interaction of NEF/MHC-I with host AP1M1; necessary for MHC-I internalization region spans residues 67–71 (EESEE). Positions 75–84 (PVRPQVPLRP) are SH3-binding; interaction with Src family tyrosine kinases. The PxxP; stabilizes the interaction of NEF/MHC-I with host AP1M1; necessary for MHC-I internalization signature appears at 78–81 (PQVP). The segment at 114 to 130 (EILDLWVYNTQGIFPDW) is mediates dimerization, Nef-PTE1 interaction. The binding to ATP6V1H stretch occupies residues 154-186 (VDPREVEEATEGETNCLLHPVCQHGMEDTEREV). The Dileucine internalization motif; necessary for CD4 internalization motif lies at 170–171 (LL). The short motif at 180-181 (ED) is the Diacidic; necessary for CD4 internalization element.

This sequence belongs to the lentivirus primate group Nef protein family. In terms of assembly, monomer; cytosolic form. Homodimer; membrane bound form. Interacts with Nef associated p21-activated kinase (PAK2); this interaction activates PAK2. Associates with the Nef-MHC-I-AP1 complex; this complex is required for MHC-I internalization. Interacts (via C-terminus) with host PI3-kinase. Interacts with host PACS1; this interaction seems to be weak. Interacts with host PACS2. Interacts with host LCK and MAPK3; these interactions inhibit the kinase activity of the latter. Interacts with host ATP6V1H; this interaction may play a role in CD4 endocytosis. Associates with the CD4-Nef-AP2 complex; this complex is required for CD4 internalization. Interacts with host AP2 subunit alpha and AP2 subunit sigma2. Interacts with TCR-zeta chain; this interaction up-regulates the Fas ligand (FasL) surface expression. Interacts with host HCK, LYN, and SRC; these interactions activate the Src family kinases. Interacts with MAP3K5; this interaction inhibits the Fas and TNFR-mediated death signals. Interacts with beta-COP and PTE1. Interacts with human RACK1; this increases Nef phosphorylation by PKC. Interacts with TP53; this interaction decreases the half-life of TP53, protecting the infected cell against p53-mediated apoptosis. The virion-associated Nef proteins are cleaved by the viral protease to release the soluble C-terminal core protein. Nef is probably cleaved concomitantly with viral structural proteins on maturation of virus particles. In terms of processing, myristoylated. Post-translationally, phosphorylated on serine residues, probably by host PKCdelta and theta.

Its subcellular location is the host cell membrane. The protein localises to the virion. The protein resides in the secreted. It localises to the host Golgi apparatus membrane. In terms of biological role, factor of infectivity and pathogenicity, required for optimal virus replication. Alters numerous pathways of T-lymphocyte function and down-regulates immunity surface molecules in order to evade host defense and increase viral infectivity. Alters the functionality of other immunity cells, like dendritic cells, monocytes/macrophages and NK cells. Its function is as follows. In infected CD4(+) T-lymphocytes, down-regulates the surface MHC-I, mature MHC-II, CD4, CD28, CCR5 and CXCR4 molecules. Mediates internalization and degradation of host CD4 through the interaction of with the cytoplasmic tail of CD4, the recruitment of AP-2 (clathrin adapter protein complex 2), internalization through clathrin coated pits, and subsequent transport to endosomes and lysosomes for degradation. Diverts host MHC-I molecules to the trans-Golgi network-associated endosomal compartments by an endocytic pathway to finally target them for degradation. MHC-I down-regulation may involve AP-1 (clathrin adapter protein complex 1) or possibly Src family kinase-ZAP70/Syk-PI3K cascade recruited by PACS2. In consequence infected cells are masked for immune recognition by cytotoxic T-lymphocytes. Decreasing the number of immune receptors also prevents reinfection by more HIV particles (superinfection). Down-regulates host SERINC3 and SERINC5 thereby excluding these proteins from the viral particles. Virion infectivity is drastically higher when SERINC3 or SERINC5 are excluded from the viral envelope, because these host antiviral proteins impair the membrane fusion event necessary for subsequent virion penetration. Functionally, bypasses host T-cell signaling by inducing a transcriptional program nearly identical to that of anti-CD3 cell activation. Interaction with TCR-zeta chain up-regulates the Fas ligand (FasL). Increasing surface FasL molecules and decreasing surface MHC-I molecules on infected CD4(+) cells send attacking cytotoxic CD8+ T-lymphocytes into apoptosis. Plays a role in optimizing the host cell environment for viral replication without causing cell death by apoptosis. Protects the infected cells from apoptosis in order to keep them alive until the next virus generation is ready to strike. Inhibits the Fas and TNFR-mediated death signals by blocking MAP3K5/ASK1. Decreases the half-life of TP53, protecting the infected cell against p53-mediated apoptosis. Inhibits the apoptotic signals regulated by the Bcl-2 family proteins through the formation of a Nef/PI3-kinase/PAK2 complex that leads to activation of PAK2 and induces phosphorylation of host BAD. In terms of biological role, extracellular Nef protein targets CD4(+) T-lymphocytes for apoptosis by interacting with CXCR4 surface receptors. The chain is Protein Nef from Homo sapiens (Human).